Reading from the N-terminus, the 246-residue chain is tRNA (guanine-N(1)-)-methyltransferase (246 aa).

Residues Gly-113 and 133–138 (IGDYVL) each bind S-adenosyl-L-methionine.

Belongs to the RNA methyltransferase TrmD family. Homodimer.

Its subcellular location is the cytoplasm. The enzyme catalyses guanosine(37) in tRNA + S-adenosyl-L-methionine = N(1)-methylguanosine(37) in tRNA + S-adenosyl-L-homocysteine + H(+). In terms of biological role, specifically methylates guanosine-37 in various tRNAs. The chain is tRNA (guanine-N(1)-)-methyltransferase from Haemophilus influenzae (strain PittEE).